Here is a 446-residue protein sequence, read N- to C-terminus: Tubulin beta-5 chain (446 aa).

The MREI motif signature appears at 1–4 (MREI). Residues Gln11, Glu69, Ser138, Gly142, Thr143, Gly144, Asn204, and Asn226 each contribute to the GTP site. Mg(2+) is bound at residue Glu69. 5-glutamyl polyglutamate is present on Glu438.

It belongs to the tubulin family. In terms of assembly, dimer of alpha and beta chains. A typical microtubule is a hollow water-filled tube with an outer diameter of 25 nm and an inner diameter of 15 nM. Alpha-beta heterodimers associate head-to-tail to form protofilaments running lengthwise along the microtubule wall with the beta-tubulin subunit facing the microtubule plus end conferring a structural polarity. Microtubules usually have 13 protofilaments but different protofilament numbers can be found in some organisms and specialized cells. Requires Mg(2+) as cofactor. Some glutamate residues at the C-terminus are polyglycylated, resulting in polyglycine chains on the gamma-carboxyl group. Glycylation is mainly limited to tubulin incorporated into axonemes (cilia and flagella) whereas glutamylation is prevalent in neuronal cells, centrioles, axonemes, and the mitotic spindle. Both modifications can coexist on the same protein on adjacent residues, and lowering polyglycylation levels increases polyglutamylation, and reciprocally. The precise function of polyglycylation is still unclear. In terms of processing, some glutamate residues at the C-terminus are polyglutamylated, resulting in polyglutamate chains on the gamma-carboxyl group. Polyglutamylation plays a key role in microtubule severing by spastin (SPAST). SPAST preferentially recognizes and acts on microtubules decorated with short polyglutamate tails: severing activity by SPAST increases as the number of glutamates per tubulin rises from one to eight, but decreases beyond this glutamylation threshold.

It is found in the cytoplasm. It localises to the cytoskeleton. Its function is as follows. Tubulin is the major constituent of microtubules, a cylinder consisting of laterally associated linear protofilaments composed of alpha- and beta-tubulin heterodimers. Microtubules grow by the addition of GTP-tubulin dimers to the microtubule end, where a stabilizing cap forms. Below the cap, tubulin dimers are in GDP-bound state, owing to GTPase activity of alpha-tubulin. The sequence is that of Tubulin beta-5 chain from Gallus gallus (Chicken).